A 593-amino-acid polypeptide reads, in one-letter code: Efflux pump FUB11 (593 aa).

Residues 1–45 (MAIDPQPSSPSLSSETIANDTIGNDNNVNEPSVEPKTQEHQHTVP) are disordered. Residues 9–30 (SPSLSSETIANDTIGNDNNVNE) are compositionally biased toward polar residues. Residue N19 is glycosylated (N-linked (GlcNAc...) asparagine). 12 helical membrane passes run 98-118 (WAFV…SSAY), 135-155 (VATL…LVWA), 167-187 (FFFT…AGSI), 195-215 (FLTG…IADM), 227-247 (MFSG…GFLG), 254-274 (WLHG…TVFI), 337-357 (IYIS…PIVF), 367-387 (IGGL…ISFA), 410-430 (LPPA…FAWT), 438-458 (IVPI…FMAL), 468-488 (IFAA…GAAF), and 503-523 (WASS…FLFY). The interval 570 to 593 (THNSHASAAHSHGHRRSLSYTRSA) is disordered.

The protein belongs to the major facilitator superfamily. DHA1 family. Polyamines/proton antiporter (TC 2.A.1.2.16) subfamily.

Its subcellular location is the cell membrane. In terms of biological role, efflux pump involved in export of fusaric acid, a mycotoxin with low to moderate toxicity to animals and humans, but with high phytotoxic properties. Constitutes a self-protecting mechanism of the fungus against critical levels of FSA within the cell. This chain is Efflux pump FUB11, found in Gibberella moniliformis (strain M3125 / FGSC 7600) (Maize ear and stalk rot fungus).